We begin with the raw amino-acid sequence, 197 residues long: Large ribosomal subunit protein uL10 (197 aa).

Positions 163–197 (GAPAAAEAPAAEESADSAAEAAAEAPAEAPAAEEN) are disordered.

The protein belongs to the universal ribosomal protein uL10 family. Part of the ribosomal stalk of the 50S ribosomal subunit. The N-terminus interacts with L11 and the large rRNA to form the base of the stalk. The C-terminus forms an elongated spine to which L12 dimers bind in a sequential fashion forming a multimeric L10(L12)X complex.

Functionally, forms part of the ribosomal stalk, playing a central role in the interaction of the ribosome with GTP-bound translation factors. This is Large ribosomal subunit protein uL10 from Pseudarthrobacter chlorophenolicus (strain ATCC 700700 / DSM 12829 / CIP 107037 / JCM 12360 / KCTC 9906 / NCIMB 13794 / A6) (Arthrobacter chlorophenolicus).